We begin with the raw amino-acid sequence, 539 residues long: G protein-coupled receptor associated sorting protein 3 (539 aa).

Over residues 1 to 10 the composition is skewed to basic residues; sequence MTGSKNKARA. 2 disordered regions span residues 1–111 and 132–170; these read MTGS…DSWF and NSVAKCENKPSTSIQARVEEHTPRTSHKSRSGAEEEEEE. 2 stretches are compositionally biased toward basic and acidic residues: residues 66-80 and 88-106; these read VVAETKEGARPESKA and FNHKAENKYARSARKDKPS. Residues 132-146 are compositionally biased toward polar residues; that stretch reads NSVAKCENKPSTSIQ.

The protein belongs to the GPRASP family. Homodimer.

It is found in the cytoplasm. The protein resides in the nucleus. Survival and differentiation promoting protein that plays a role in the regulation of neurosynaptogenesis. Induces phosphatase PP2A activity which results in APP dephosphorylation and inhibits BACE1-mediated processing of APP. This is G protein-coupled receptor associated sorting protein 3 (Gprasp3) from Rattus norvegicus (Rat).